A 246-amino-acid chain; its full sequence is Pyridoxine 5'-phosphate synthase (246 aa).

Asn12 lines the 3-amino-2-oxopropyl phosphate pocket. 14–15 (DH) contacts 1-deoxy-D-xylulose 5-phosphate. Arg23 serves as a coordination point for 3-amino-2-oxopropyl phosphate. His48 acts as the Proton acceptor in catalysis. 2 residues coordinate 1-deoxy-D-xylulose 5-phosphate: Arg50 and His55. Glu75 functions as the Proton acceptor in the catalytic mechanism. Thr105 contacts 1-deoxy-D-xylulose 5-phosphate. His196 acts as the Proton donor in catalysis. 3-amino-2-oxopropyl phosphate-binding positions include Gly197 and 218-219 (GH).

This sequence belongs to the PNP synthase family. As to quaternary structure, homooctamer; tetramer of dimers.

It is found in the cytoplasm. It catalyses the reaction 3-amino-2-oxopropyl phosphate + 1-deoxy-D-xylulose 5-phosphate = pyridoxine 5'-phosphate + phosphate + 2 H2O + H(+). Its pathway is cofactor biosynthesis; pyridoxine 5'-phosphate biosynthesis; pyridoxine 5'-phosphate from D-erythrose 4-phosphate: step 5/5. Catalyzes the complicated ring closure reaction between the two acyclic compounds 1-deoxy-D-xylulose-5-phosphate (DXP) and 3-amino-2-oxopropyl phosphate (1-amino-acetone-3-phosphate or AAP) to form pyridoxine 5'-phosphate (PNP) and inorganic phosphate. The polypeptide is Pyridoxine 5'-phosphate synthase (Pseudomonas syringae pv. tomato (strain ATCC BAA-871 / DC3000)).